A 160-amino-acid polypeptide reads, in one-letter code: Eosinophil cationic protein (160 aa).

The N-terminal stretch at 1 to 27 (MVPKLFTSQICLLLLLGLSGVGGSLHA) is a signal peptide. Positions 28–72 (KPRQFTRAQWFAIQHVSLNPPQCTTAMRVINNYQRRCKDQNTFLR) are required for nearly all of the bactericidal activities; partially involved in LPS-binding. H42 functions as the Proton acceptor in the catalytic mechanism. Cystine bridges form between C50-C110, C64-C123, C82-C138, and C89-C98. Y60 carries the 3'-nitrotyrosine modification. 65–69 (KDQNT) contributes to the substrate binding site. 4 N-linked (GlcNAc...) asparagine glycosylation sites follow: N86, N92, N111, and N119. H155 functions as the Proton donor in the catalytic mechanism.

Belongs to the pancreatic ribonuclease family. In terms of assembly, interacts with bacterial lipopolysaccharide (LPS) and lipoteichoic acid (LTA). In vitro interacts with phospholipid bilayers.

It is found in the secreted. In terms of biological role, cytotoxin and helminthotoxin with low-efficiency ribonuclease activity. Possesses a wide variety of biological activities. Exhibits antibacterial activity. The protein is Eosinophil cationic protein (RNASE3) of Pongo pygmaeus (Bornean orangutan).